A 290-amino-acid polypeptide reads, in one-letter code: Protein CREG2 (290 aa).

The signal sequence occupies residues 1–31 (MSVRRGRRPARPGTRLSWLLCCSALLSPAAG). Asn165 and Asn166 each carry an N-linked (GlcNAc...) asparagine glycan.

It belongs to the CREG family. In terms of processing, it is not sure whether N-glycosylation is on Asn-165 and/or Asn-166. Brain specific mainly in the limbic system and faintly in the spinal cord but not in cerebellum.

It is found in the secreted. This chain is Protein CREG2 (CREG2), found in Homo sapiens (Human).